The chain runs to 70 residues: Movement protein TGBp3 (70 aa).

Residues 1-4 (MEVN) lie on the Lumenal side of the membrane. The helical transmembrane segment at 5–27 (TYLNAIILVLVVTIIAVISTSLV) threads the bilayer. Residues 28–70 (RTEPCVIKITGESITVLACKLDAETIKAIADLKPLSVERLSFH) are Cytoplasmic-facing.

This sequence belongs to the Tymovirales TGBp3 protein family.

Its subcellular location is the host endoplasmic reticulum membrane. Functionally, plays a role in viral cell-to-cell propagation, by facilitating genome transport to neighboring plant cells through plasmosdesmata. May induce the formation of granular vesicles derived from the endoplasmic reticulum, which align on actin filaments. In Brassica campestris (Field mustard), this protein is Movement protein TGBp3.